The chain runs to 292 residues: Protease HtpX (292 aa).

Transmembrane regions (helical) follow at residues 4-24 (IILF…ILAV) and 32-52 (IYGL…LSLI). His139 serves as a coordination point for Zn(2+). Glu140 is a catalytic residue. Residue His143 coordinates Zn(2+). The next 2 membrane-spanning stretches (helical) occupy residues 150–170 (ITMT…SRII) and 193–213 (FLFF…ASII). Glu222 provides a ligand contact to Zn(2+).

This sequence belongs to the peptidase M48B family. Requires Zn(2+) as cofactor.

It is found in the cell membrane. This Buchnera aphidicola subsp. Schizaphis graminum (strain Sg) protein is Protease HtpX.